A 190-amino-acid chain; its full sequence is NADH-quinone oxidoreductase subunit B (190 aa).

[4Fe-4S] cluster is bound by residues C39, C40, C104, and C135.

This sequence belongs to the complex I 20 kDa subunit family. NDH-1 is composed of 14 different subunits. Subunits NuoB, C, D, E, F, and G constitute the peripheral sector of the complex. [4Fe-4S] cluster serves as cofactor.

The protein resides in the cell inner membrane. The catalysed reaction is a quinone + NADH + 5 H(+)(in) = a quinol + NAD(+) + 4 H(+)(out). NDH-1 shuttles electrons from NADH, via FMN and iron-sulfur (Fe-S) centers, to quinones in the respiratory chain. The immediate electron acceptor for the enzyme in this species is believed to be a menaquinone. Couples the redox reaction to proton translocation (for every two electrons transferred, four hydrogen ions are translocated across the cytoplasmic membrane), and thus conserves the redox energy in a proton gradient. The sequence is that of NADH-quinone oxidoreductase subunit B from Chlorobium chlorochromatii (strain CaD3).